The chain runs to 123 residues: ATP synthase epsilon chain (123 aa).

Positions 96–123 (ESRKQSAETEHDKAVAESELRAVKRMEA) are disordered.

The protein belongs to the ATPase epsilon chain family. As to quaternary structure, F-type ATPases have 2 components, CF(1) - the catalytic core - and CF(0) - the membrane proton channel. CF(1) has five subunits: alpha(3), beta(3), gamma(1), delta(1), epsilon(1). CF(0) has three main subunits: a, b and c.

Its subcellular location is the cell membrane. Functionally, produces ATP from ADP in the presence of a proton gradient across the membrane. The polypeptide is ATP synthase epsilon chain (Corynebacterium jeikeium (strain K411)).